The sequence spans 95 residues: MALKPLHDRVLVRRTESEEKTAGGLIIPDSAKEKPSEGVVVACGEGARKDSGELIAMAVKEGDNILFGKWSGTEVTVDGEELLMMKESDIMGVIV.

The protein belongs to the GroES chaperonin family. In terms of assembly, heptamer of 7 subunits arranged in a ring. Interacts with the chaperonin GroEL.

The protein localises to the cytoplasm. Its function is as follows. Together with the chaperonin GroEL, plays an essential role in assisting protein folding. The GroEL-GroES system forms a nano-cage that allows encapsulation of the non-native substrate proteins and provides a physical environment optimized to promote and accelerate protein folding. GroES binds to the apical surface of the GroEL ring, thereby capping the opening of the GroEL channel. In Ruegeria sp. (strain TM1040) (Silicibacter sp.), this protein is Co-chaperonin GroES.